The following is a 462-amino-acid chain: Fumarate hydratase class II (462 aa).

Residues 98 to 100, Arg-126, 129 to 132, 139 to 141, and Thr-187 contribute to the substrate site; these read SGT, HPND, and SSN. Residues 120–141 form a disordered region; that stretch reads GTRGKGRKVHPNDHVNKGQSSN. The active-site Proton donor/acceptor is His-188. The active site involves Ser-318. Residues Ser-319 and 324–326 each bind substrate; that span reads KVN.

The protein belongs to the class-II fumarase/aspartase family. Fumarase subfamily. As to quaternary structure, homotetramer.

It localises to the cytoplasm. The catalysed reaction is (S)-malate = fumarate + H2O. The protein operates within carbohydrate metabolism; tricarboxylic acid cycle; (S)-malate from fumarate: step 1/1. Involved in the TCA cycle. Catalyzes the stereospecific interconversion of fumarate to L-malate. This Nitrosomonas europaea (strain ATCC 19718 / CIP 103999 / KCTC 2705 / NBRC 14298) protein is Fumarate hydratase class II.